We begin with the raw amino-acid sequence, 117 residues long: Iron-sulfur cluster insertion protein ErpA (117 aa).

3 residues coordinate iron-sulfur cluster: Cys45, Cys109, and Cys111.

It belongs to the HesB/IscA family. As to quaternary structure, homodimer. Iron-sulfur cluster serves as cofactor.

In terms of biological role, required for insertion of 4Fe-4S clusters for at least IspG. The sequence is that of Iron-sulfur cluster insertion protein ErpA from Saccharophagus degradans (strain 2-40 / ATCC 43961 / DSM 17024).